Here is a 116-residue protein sequence, read N- to C-terminus: Aspartate 1-decarboxylase (116 aa).

The Schiff-base intermediate with substrate; via pyruvic acid role is filled by Ser25. Ser25 bears the Pyruvic acid (Ser) mark. A substrate-binding site is contributed by Thr57. Residue Tyr58 is the Proton donor of the active site. 73–75 is a binding site for substrate; the sequence is GAA.

This sequence belongs to the PanD family. Heterooctamer of four alpha and four beta subunits. Requires pyruvate as cofactor. Is synthesized initially as an inactive proenzyme, which is activated by self-cleavage at a specific serine bond to produce a beta-subunit with a hydroxyl group at its C-terminus and an alpha-subunit with a pyruvoyl group at its N-terminus.

Its subcellular location is the cytoplasm. It carries out the reaction L-aspartate + H(+) = beta-alanine + CO2. The protein operates within cofactor biosynthesis; (R)-pantothenate biosynthesis; beta-alanine from L-aspartate: step 1/1. Functionally, catalyzes the pyruvoyl-dependent decarboxylation of aspartate to produce beta-alanine. The protein is Aspartate 1-decarboxylase of Syntrophus aciditrophicus (strain SB).